The sequence spans 233 residues: Ribosome maturation protein SDO1 homolog (233 aa).

It belongs to the SDO1/SBDS family.

This chain is Ribosome maturation protein SDO1 homolog, found in Aeropyrum pernix (strain ATCC 700893 / DSM 11879 / JCM 9820 / NBRC 100138 / K1).